Consider the following 354-residue polypeptide: DNA polymerase IV (354 aa).

In terms of domain architecture, UmuC spans 14-198 (IIHIDMDAFF…MDIAKFHGVG (185 aa)). Mg(2+)-binding residues include Asp-18 and Asp-116. The active site involves Glu-117.

This sequence belongs to the DNA polymerase type-Y family. In terms of assembly, monomer. Requires Mg(2+) as cofactor.

It is found in the cytoplasm. The enzyme catalyses DNA(n) + a 2'-deoxyribonucleoside 5'-triphosphate = DNA(n+1) + diphosphate. Poorly processive, error-prone DNA polymerase involved in untargeted mutagenesis. Copies undamaged DNA at stalled replication forks, which arise in vivo from mismatched or misaligned primer ends. These misaligned primers can be extended by PolIV. Exhibits no 3'-5' exonuclease (proofreading) activity. May be involved in translesional synthesis, in conjunction with the beta clamp from PolIII. This chain is DNA polymerase IV, found in Streptococcus sanguinis (strain SK36).